The sequence spans 184 residues: Protein GrpE (184 aa).

Positions 1–10 are enriched in acidic residues; that stretch reads MTDTPPENEE. The tract at residues 1–22 is disordered; sequence MTDTPPENEEQHESNVQNENEV.

It belongs to the GrpE family. As to quaternary structure, homodimer.

The protein localises to the cytoplasm. Participates actively in the response to hyperosmotic and heat shock by preventing the aggregation of stress-denatured proteins, in association with DnaK and GrpE. It is the nucleotide exchange factor for DnaK and may function as a thermosensor. Unfolded proteins bind initially to DnaJ; upon interaction with the DnaJ-bound protein, DnaK hydrolyzes its bound ATP, resulting in the formation of a stable complex. GrpE releases ADP from DnaK; ATP binding to DnaK triggers the release of the substrate protein, thus completing the reaction cycle. Several rounds of ATP-dependent interactions between DnaJ, DnaK and GrpE are required for fully efficient folding. The chain is Protein GrpE from Chlamydia pneumoniae (Chlamydophila pneumoniae).